The sequence spans 302 residues: Probable proteasome inhibitor (302 aa).

Alanine 2 is modified (N-acetylalanine). 2 disordered regions span residues 151–188 (LDGKPKPVASRAQSSSETNEEPRYYDDTPNPLGPQIHP) and 259–302 (ARFD…SDFI). Positions 259–269 (ARFDPYGPPGV) are enriched in pro residues.

Belongs to the proteasome inhibitor PI31 family.

In terms of biological role, could play an important role in control of proteasome function. Inhibits the hydrolysis of protein and peptide substrates by the 20S proteasome. This is Probable proteasome inhibitor from Arabidopsis thaliana (Mouse-ear cress).